A 147-amino-acid polypeptide reads, in one-letter code: Phospholipase A2-beta (147 aa).

The first 28 residues, 1–28 (MMFRTSLMRFAAAFFAIVFVVLVGVARS), serve as a signal peptide directing secretion. Intrachain disulfides connect cysteine 31/cysteine 58, cysteine 35/cysteine 64, cysteine 40/cysteine 117, cysteine 51/cysteine 71, cysteine 70/cysteine 95, and cysteine 77/cysteine 88. 3 residues coordinate Ca(2+): tyrosine 50, glycine 52, and histidine 55. Histidine 74 is a catalytic residue. Aspartate 75 is a Ca(2+) binding site. The short motif at 144–147 (KTEL) is the Prevents secretion from ER element.

This sequence belongs to the phospholipase A2 family. Requires Ca(2+) as cofactor. As to expression, ubiquitous but expressed at a low level. Detected in vascular tissues and in the guard cells. Predominantly detected in pollen.

Its subcellular location is the secreted. The protein resides in the endoplasmic reticulum. It catalyses the reaction a 1,2-diacyl-sn-glycero-3-phosphocholine + H2O = a 1-acyl-sn-glycero-3-phosphocholine + a fatty acid + H(+). Inhibited by aristolochic acid. PA2 catalyzes the calcium-dependent hydrolysis of the 2-acyl groups in 3-sn-phosphoglycerides. Releases lysophospholipids (LPLs) and free fatty acids (FFAs) from membrane phospholipids in response to hormones and other external stimuli. Regulates the process of cell elongation and plays important roles in shoot gravitropism by mediating auxin-induced cell elongation. Involved in stomatal opening in response to light. Plays a role in pollen development and germination and tube growth. In Arabidopsis thaliana (Mouse-ear cress), this protein is Phospholipase A2-beta (PLA2-BETA).